Here is a 483-residue protein sequence, read N- to C-terminus: Serine/threonine-protein phosphatase 2A regulatory subunit phr2AB (483 aa).

WD repeat units follow at residues 22–61 and 88–129; these read SDAN…QSSK and EIEE…IKQV. Residues 132–152 are disordered; that stretch reads SATTTGPSYNGSLASNNTRSP. WD repeat units lie at residues 206-244, 255-295, 314-352, and 369-410; these read AHAY…ECFN, DLTE…LCDN, EIIS…KPVK, and ENDC…DVCL. Positions 421 to 443 are disordered; that stretch reads TKTLTTKMKLRSSKKEPKKPEDI. The span at 433–443 shows a compositional bias: basic and acidic residues; that stretch reads SKKEPKKPEDI. One copy of the WD 7 repeat lies at 449 to 483; sequence EYTKKTLHCAWHPKDNLIAVGAANTVYLYAATENK.

It belongs to the phosphatase 2A regulatory subunit B family. In terms of assembly, PP2A consists of a trimeric holoenzyme, composed of a 37 kDa catalytic subunit (C subunit) and a 65 kDa constant regulatory subunit (A subunit), that associates with a variety of regulatory subunits (B subunit) such as phr2AB (B55) and psrA (B56 homolog). The trimer may partially dissociates into a core 'AC' dimer equally active compared to the trimer.

It localises to the cytoplasm. The protein resides in the cytosol. Its subcellular location is the cytoskeleton. It is found in the microtubule organizing center. The protein localises to the centrosome. Its function is as follows. The B regulatory subunit might modulate substrate selectivity and catalytic activity, and might also direct the localization of the catalytic enzyme to a particular subcellular compartment. This chain is Serine/threonine-protein phosphatase 2A regulatory subunit phr2AB (phr2aB), found in Dictyostelium discoideum (Social amoeba).